We begin with the raw amino-acid sequence, 369 residues long: Chorismate synthase (369 aa).

Residues R48 and R54 each coordinate NADP(+). FMN is bound by residues 125–127 (RSS), 238–239 (NA), G278, 293–297 (KPTSS), and R319.

The protein belongs to the chorismate synthase family. In terms of assembly, homotetramer. It depends on FMNH2 as a cofactor.

It carries out the reaction 5-O-(1-carboxyvinyl)-3-phosphoshikimate = chorismate + phosphate. Its pathway is metabolic intermediate biosynthesis; chorismate biosynthesis; chorismate from D-erythrose 4-phosphate and phosphoenolpyruvate: step 7/7. In terms of biological role, catalyzes the anti-1,4-elimination of the C-3 phosphate and the C-6 proR hydrogen from 5-enolpyruvylshikimate-3-phosphate (EPSP) to yield chorismate, which is the branch point compound that serves as the starting substrate for the three terminal pathways of aromatic amino acid biosynthesis. This reaction introduces a second double bond into the aromatic ring system. The polypeptide is Chorismate synthase (Burkholderia thailandensis (strain ATCC 700388 / DSM 13276 / CCUG 48851 / CIP 106301 / E264)).